Here is a 143-residue protein sequence, read N- to C-terminus: Large ribosomal subunit protein uL15 (143 aa).

Positions 20 to 52 (GRGIGSGKGKTAGRGHKGQHSRAGGYHKVGFEG) are disordered. Residues 30-39 (TAGRGHKGQH) are compositionally biased toward basic residues.

This sequence belongs to the universal ribosomal protein uL15 family. In terms of assembly, part of the 50S ribosomal subunit.

Its function is as follows. Binds to the 23S rRNA. The chain is Large ribosomal subunit protein uL15 from Coxiella burnetii (strain CbuG_Q212) (Coxiella burnetii (strain Q212)).